The following is a 284-amino-acid chain: Tropomyosin (284 aa).

The stretch at 1–284 (MDGIKKKMIA…DQTFAELTGY (284 aa)) forms a coiled coil. The disordered stretch occupies residues 111–131 (TKLEEASKTAEESERGRKDLE).

It belongs to the tropomyosin family. As to quaternary structure, homodimer.

Its function is as follows. Tropomyosin, in association with the troponin complex, plays a central role in the calcium dependent regulation of muscle contraction. This Schistosoma japonicum (Blood fluke) protein is Tropomyosin.